The following is a 1040-amino-acid chain: Alpha-mannosidase 2C1 (1040 aa).

Residues histidine 260, aspartate 262, aspartate 372, and histidine 577 each coordinate Co(2+). Aspartate 372 functions as the Nucleophile in the catalytic mechanism.

It belongs to the glycosyl hydrolase 38 family. Co(2+) is required as a cofactor.

Its subcellular location is the cytoplasm. It catalyses the reaction Hydrolysis of terminal, non-reducing alpha-D-mannose residues in alpha-D-mannosides.. Its activity is regulated as follows. Strongly inhibited by swainsonine. Also inhibited to a lesser extent by deoxymannojirimycin (DMM). Cleaves alpha 1,2-, alpha 1,3-, and alpha 1,6-linked mannose residues on cytoplasmic free oligosaccharides generated by N-glycoprotein degradation pathways. The protein is Alpha-mannosidase 2C1 (MAN2C1) of Homo sapiens (Human).